A 425-amino-acid polypeptide reads, in one-letter code: Glutamyl-tRNA reductase (425 aa).

Residues 49 to 52 (TCNR), serine 109, 114 to 116 (EGQ), and glutamine 120 each bind substrate. Residue cysteine 50 is the Nucleophile of the active site. An NADP(+)-binding site is contributed by 189 to 194 (GAGETG).

The protein belongs to the glutamyl-tRNA reductase family. In terms of assembly, homodimer.

It catalyses the reaction (S)-4-amino-5-oxopentanoate + tRNA(Glu) + NADP(+) = L-glutamyl-tRNA(Glu) + NADPH + H(+). The protein operates within porphyrin-containing compound metabolism; protoporphyrin-IX biosynthesis; 5-aminolevulinate from L-glutamyl-tRNA(Glu): step 1/2. It participates in porphyrin-containing compound metabolism; chlorophyll biosynthesis. Functionally, catalyzes the NADPH-dependent reduction of glutamyl-tRNA(Glu) to glutamate 1-semialdehyde (GSA). The sequence is that of Glutamyl-tRNA reductase from Chlorobium phaeovibrioides (strain DSM 265 / 1930) (Prosthecochloris vibrioformis (strain DSM 265)).